The primary structure comprises 360 residues: Photosystem II protein D1 2 (360 aa).

The next 3 helical transmembrane spans lie at 29–46 (YIGW…AATT), 118–133 (HFLT…EWEL), and 142–156 (WICL…AATA). H118 serves as a coordination point for chlorophyll a. Y126 contacts pheophytin a. Positions 170 and 189 each coordinate [CaMn4O5] cluster. A helical membrane pass occupies residues 197–218 (FHMLGVAGVFGGSLFSAMHGSL). H198 contacts chlorophyll a. A quinone-binding positions include H215 and 264–265 (SF). H215 provides a ligand contact to Fe cation. H272 lines the Fe cation pocket. Residues 274–288 (FLAAWPVIGIWFTAL) form a helical membrane-spanning segment. The [CaMn4O5] cluster site is built by H332, E333, D342, and A344. A propeptide spanning residues 345–360 (AGEVAPVAISAPAING) is cleaved from the precursor.

The protein belongs to the reaction center PufL/M/PsbA/D family. In terms of assembly, PSII is composed of 1 copy each of membrane proteins PsbA, PsbB, PsbC, PsbD, PsbE, PsbF, PsbH, PsbI, PsbJ, PsbK, PsbL, PsbM, PsbT, PsbX, PsbY, PsbZ, Psb30/Ycf12, peripheral proteins PsbO, CyanoQ (PsbQ), PsbU, PsbV and a large number of cofactors. It forms dimeric complexes. The D1/D2 heterodimer binds P680, chlorophylls that are the primary electron donor of PSII, and subsequent electron acceptors. It shares a non-heme iron and each subunit binds pheophytin, quinone, additional chlorophylls, carotenoids and lipids. D1 provides most of the ligands for the Mn4-Ca-O5 cluster of the oxygen-evolving complex (OEC). There is also a Cl(-1) ion associated with D1 and D2, which is required for oxygen evolution. The PSII complex binds additional chlorophylls, carotenoids and specific lipids. is required as a cofactor. Post-translationally, tyr-161 forms a radical intermediate that is referred to as redox-active TyrZ, YZ or Y-Z. C-terminally processed by CtpA; processing is essential to allow assembly of the oxygen-evolving complex and thus photosynthetic growth.

It localises to the cellular thylakoid membrane. It carries out the reaction 2 a plastoquinone + 4 hnu + 2 H2O = 2 a plastoquinol + O2. Photosystem II (PSII) is a light-driven water:plastoquinone oxidoreductase that uses light energy to abstract electrons from H(2)O, generating O(2) and a proton gradient subsequently used for ATP formation. It consists of a core antenna complex that captures photons, and an electron transfer chain that converts photonic excitation into a charge separation. The D1/D2 (PsbA/PsbD) reaction center heterodimer binds P680, the primary electron donor of PSII as well as several subsequent electron acceptors. This Nostoc sp. (strain PCC 7120 / SAG 25.82 / UTEX 2576) protein is Photosystem II protein D1 2.